We begin with the raw amino-acid sequence, 438 residues long: uncharacterized protein (438 aa).

Disordered stretches follow at residues 1 to 22 and 156 to 264; these read MRDNTAKGITAGSGSQQTTYDP and DTAK…PWRP. Basic and acidic residues predominate over residues 156 to 170; sequence DTAKSNEKLQGDESK. Positions 171–189 are enriched in low complexity; it reads SSNGSSSTSTTTQRGSTNS. The span at 191–206 shows a compositional bias: basic and acidic residues; sequence TKVKALKIEVKKKSDS.

It belongs to the adhesin P1 family.

This is an uncharacterized protein from Mycoplasma pneumoniae (strain ATCC 29342 / M129 / Subtype 1) (Mycoplasmoides pneumoniae).